The following is a 380-amino-acid chain: D-alanine--D-alanine ligase (380 aa).

Residues 142–348 (KQVLTAHGIR…YADLIDRLIE (207 aa)) form the ATP-grasp domain. ATP is bound at residue 172-227 (QSRLGDNVFIKPANQGSSVGIHKASNVQEYLDGVADAFRYDYKVLVEQTIDGPQEV). Residues Asp-302, Glu-315, and Asn-317 each contribute to the Mg(2+) site.

Belongs to the D-alanine--D-alanine ligase family. It depends on Mg(2+) as a cofactor. Requires Mn(2+) as cofactor.

The protein localises to the cytoplasm. The enzyme catalyses 2 D-alanine + ATP = D-alanyl-D-alanine + ADP + phosphate + H(+). It participates in cell wall biogenesis; peptidoglycan biosynthesis. Functionally, cell wall formation. This chain is D-alanine--D-alanine ligase, found in Levilactobacillus brevis (strain ATCC 367 / BCRC 12310 / CIP 105137 / JCM 1170 / LMG 11437 / NCIMB 947 / NCTC 947) (Lactobacillus brevis).